The sequence spans 137 residues: Nucleoside diphosphate kinase (137 aa).

Residues lysine 9, phenylalanine 57, arginine 85, threonine 91, arginine 102, and asparagine 112 each coordinate ATP. The active-site Pros-phosphohistidine intermediate is the histidine 115.

It belongs to the NDK family. Homotetramer. Requires Mg(2+) as cofactor.

The protein resides in the cytoplasm. The enzyme catalyses a 2'-deoxyribonucleoside 5'-diphosphate + ATP = a 2'-deoxyribonucleoside 5'-triphosphate + ADP. It catalyses the reaction a ribonucleoside 5'-diphosphate + ATP = a ribonucleoside 5'-triphosphate + ADP. In terms of biological role, major role in the synthesis of nucleoside triphosphates other than ATP. The ATP gamma phosphate is transferred to the NDP beta phosphate via a ping-pong mechanism, using a phosphorylated active-site intermediate. This chain is Nucleoside diphosphate kinase, found in Desulfotalea psychrophila (strain LSv54 / DSM 12343).